The following is a 230-amino-acid chain: Orotidine 5'-phosphate decarboxylase (230 aa).

Substrate is bound by residues Asp16, Lys38, 65–74, Thr119, Arg180, Gln189, Gly209, and Arg210; that span reads DLKLHDIGNT. Lys67 serves as the catalytic Proton donor.

This sequence belongs to the OMP decarboxylase family. Type 1 subfamily. As to quaternary structure, homodimer.

It catalyses the reaction orotidine 5'-phosphate + H(+) = UMP + CO2. It participates in pyrimidine metabolism; UMP biosynthesis via de novo pathway; UMP from orotate: step 2/2. In terms of biological role, catalyzes the decarboxylation of orotidine 5'-monophosphate (OMP) to uridine 5'-monophosphate (UMP). The protein is Orotidine 5'-phosphate decarboxylase of Methylobacterium radiotolerans (strain ATCC 27329 / DSM 1819 / JCM 2831 / NBRC 15690 / NCIMB 10815 / 0-1).